A 69-amino-acid polypeptide reads, in one-letter code: Putative F-box protein At2g33705 (69 aa).

An F-box domain is found at 14 to 59 (GVNLEQIPYDLVLEILLKLSAKSIARFRCVSKLWDSTFRSRYFTEL).

The protein is Putative F-box protein At2g33705 of Arabidopsis thaliana (Mouse-ear cress).